The chain runs to 591 residues: PE-PGRS family protein PE_PGRS5 (591 aa).

One can recognise a PE domain in the interval 1-93 (MSFVIAQPEM…AGAYASAEAA (93 aa)). The interval 94–591 (NAGPNMLAAV…GGKGNNGNPG (498 aa)) is PGRS. Gly residues-rich tracts occupy residues 303–324 (GAGG…GNGG), 336–363 (ASGG…GHVS), 371–412 (GAGG…GDGG), 477–491 (SEAG…GGDG), 539–567 (AGTG…GVNG), and 579–591 (GATG…GNPG). Disordered stretches follow at residues 303–412 (GAGG…GDGG), 468–491 (GSVN…GGDG), and 539–591 (AGTG…GNPG).

The protein belongs to the mycobacterial PE family. PGRS subfamily. As to quaternary structure, interacts with human TLR4.

The protein localises to the host endoplasmic reticulum. Involved in endoplasmic reticulum (ER) stress-mediated apoptosis through human Toll-like receptor 4 (TLR4) signaling pathway. Localizes to the host ER, leading to ER stress, disruption of intracellular Ca(2+) homeostasis and increase of nitric oxide (NO) and reactive oxygen species (ROS) levels. Stress response results in caspase-8 activation and apoptosis of macrophage cells. Apoptosis may lead to dissemination of the bacteria, thereby spreading the disease. This Mycobacterium tuberculosis (strain ATCC 25618 / H37Rv) protein is PE-PGRS family protein PE_PGRS5.